A 442-amino-acid polypeptide reads, in one-letter code: Protein PRRC1-B (442 aa).

The interval 1 to 24 is disordered; the sequence is MMEESGIETTPPSTPPPSTIGTSV.

This sequence belongs to the PRRC1 family.

The protein localises to the golgi apparatus. This Xenopus laevis (African clawed frog) protein is Protein PRRC1-B (prrc1-b).